A 294-amino-acid chain; its full sequence is HTH-type transcriptional regulator XapR (294 aa).

Residues 7-64 (TDLKLLRYFLAVAEELHFGRAAARLNMSQPPLSIHIKELENQLGTQLFIRHSRSVVLT) enclose the HTH lysR-type domain. The H-T-H motif DNA-binding region spans 24 to 43 (FGRAAARLNMSQPPLSIHIK).

The protein belongs to the LysR transcriptional regulatory family.

Its function is as follows. Positive regulator required for the expression of xapA and xapB. Binds to the inducer xanthosine. In Escherichia coli (strain K12), this protein is HTH-type transcriptional regulator XapR (xapR).